A 618-amino-acid chain; its full sequence is 1-deoxy-D-xylulose-5-phosphate synthase (618 aa).

Residues H70 and 111 to 113 contribute to the thiamine diphosphate site; that span reads GHS. D142 contributes to the Mg(2+) binding site. Thiamine diphosphate-binding positions include 143–144, N171, Y278, and E360; that span reads GS. Residue N171 participates in Mg(2+) binding.

It belongs to the transketolase family. DXPS subfamily. Homodimer. Mg(2+) is required as a cofactor. It depends on thiamine diphosphate as a cofactor.

It carries out the reaction D-glyceraldehyde 3-phosphate + pyruvate + H(+) = 1-deoxy-D-xylulose 5-phosphate + CO2. It participates in metabolic intermediate biosynthesis; 1-deoxy-D-xylulose 5-phosphate biosynthesis; 1-deoxy-D-xylulose 5-phosphate from D-glyceraldehyde 3-phosphate and pyruvate: step 1/1. Catalyzes the acyloin condensation reaction between C atoms 2 and 3 of pyruvate and glyceraldehyde 3-phosphate to yield 1-deoxy-D-xylulose-5-phosphate (DXP). The chain is 1-deoxy-D-xylulose-5-phosphate synthase from Helicobacter pylori (strain G27).